The primary structure comprises 204 residues: Protein OPG030 (204 aa).

The BACK domain maps to 95-177 (FLRQYINNNI…ITYSELTNAI (83 aa)).

Belongs to the orthopoxvirus OPG030 family.

The chain is Protein OPG030 (OPG30) from Bos taurus (Bovine).